The sequence spans 309 residues: Protein EXORDIUM-like 1 (309 aa).

Residues M1–T23 form the signal peptide.

Belongs to the EXORDIUM family.

The protein localises to the secreted. It is found in the extracellular space. The protein resides in the apoplast. In terms of biological role, may play a role in a brassinosteroid-dependent regulatory pathway that controls growth and development under low carbon and energy availability. This Arabidopsis thaliana (Mouse-ear cress) protein is Protein EXORDIUM-like 1 (EXL1).